A 346-amino-acid chain; its full sequence is KH domain-containing, RNA-binding, signal transduction-associated protein 3 (346 aa).

Positions 1–160 (MEEKYLPELM…IKKFLIPDYN (160 aa)) are involved in homodimerization. Lys-4 is covalently cross-linked (Glycyl lysine isopeptide (Lys-Gly) (interchain with G-Cter in SUMO2)). The 67-residue stretch at 61 to 127 (LIPVKQFPKF…AKYFHLNDDL (67 aa)) folds into the KH domain. 2 disordered regions span residues 212 to 266 (RPVA…QETY) and 317 to 346 (GQEE…YGRY). Positions 253–262 (GYRPPPPPPT) are enriched in pro residues.

It belongs to the KHDRBS family. In terms of assembly, self-associates to form homooligomers; dimerization increases RNA affinity. Interacts with KHDRBS2/SLM-1. Interacts with KHDRBS1/SAM68; heterooligomer formation of KHDRBS family proteins may modulate RNA substrate specificity. Interacts with the splicing regulatory proteins SFRS9, SAFB and YTHDC1. Interacts with HNRPL, RBMX, p85 subunit of PI3-kinase, SERPINB5. Post-translationally, phosphorylated on tyrosine residues by PTK6. In terms of tissue distribution, highly expressed in testis and brain. In adult cerebellum expressed predominantly in internal granular layer interneurons and in hippocampus is exclusively expressed in CA neurons; expression is restricted to neuronal subpopulations largely non-overlapping with expression of KHDRBS2/SLM-1.

Its subcellular location is the nucleus. Functionally, RNA-binding protein that plays a role in the regulation of alternative splicing and influences mRNA splice site selection and exon inclusion. Binds preferentially to the 5'-[AU]UAAA-3' motif in vitro. Binds optimally to RNA containing 5'-[AU]UAA-3' as a bipartite motif spaced by more than 15 nucleotides. Binds poly(A). RNA-binding abilities are down-regulated by tyrosine kinase PTK6. Involved in splice site selection of vascular endothelial growth factor. In vitro regulates CD44 alternative splicing by direct binding to purine-rich exonic enhancer. Can regulate alternative splicing of neurexins NRXN1-3 in the laminin G-like domain 6 containing the evolutionary conserved neurexin alternative spliced segment 4 (AS4) involved in neurexin selective targeting to postsynaptic partners such as neuroligins and LRRTM family members. High concentrations in forebrain structures block splicing inclusion of NRXN1-3 AS4 exons while low concentrations favor their inclusion. Targeted, cell-type specific splicing regulation of NRXN1 at AS4 is involved in neuronal glutamatergic synapse function and plasticity and is linked to behavioral aspects. Regulates expression of KHDRBS2/SLIM-1 in defined neuron populations in the hippocampus by modifying its alternative splicing resulting in a transcript predicted to undergo nonsense-mediated decay. Can bind FABP9 mRNA. May play a role as a negative regulator of cell growth. Inhibits cell proliferation. This is KH domain-containing, RNA-binding, signal transduction-associated protein 3 (Khdrbs3) from Mus musculus (Mouse).